The following is a 591-amino-acid chain: Chaperone protein DnaK (591 aa).

Thr175 carries the post-translational modification Phosphothreonine; by autocatalysis. Residues 568–577 show a composition bias toward low complexity; that stretch reads AQAAEFANKQ. The tract at residues 568–591 is disordered; it reads AQAAEFANKQNESDPNNNSSEQNN. The span at 580-591 shows a compositional bias: polar residues; the sequence is SDPNNNSSEQNN.

The protein belongs to the heat shock protein 70 family.

Functionally, acts as a chaperone. In Mycoplasma mycoides subsp. mycoides SC (strain CCUG 32753 / NCTC 10114 / PG1), this protein is Chaperone protein DnaK.